The following is a 305-amino-acid chain: Ribosomal RNA small subunit methyltransferase H (305 aa).

Residues 37–39 (GGH), D57, F85, D101, and H108 each bind S-adenosyl-L-methionine.

Belongs to the methyltransferase superfamily. RsmH family.

It localises to the cytoplasm. It catalyses the reaction cytidine(1402) in 16S rRNA + S-adenosyl-L-methionine = N(4)-methylcytidine(1402) in 16S rRNA + S-adenosyl-L-homocysteine + H(+). Functionally, specifically methylates the N4 position of cytidine in position 1402 (C1402) of 16S rRNA. This chain is Ribosomal RNA small subunit methyltransferase H, found in Parabacteroides distasonis (strain ATCC 8503 / DSM 20701 / CIP 104284 / JCM 5825 / NCTC 11152).